The sequence spans 230 residues: Large ribosomal subunit protein uL1 (230 aa).

It belongs to the universal ribosomal protein uL1 family. As to quaternary structure, part of the 50S ribosomal subunit.

Binds directly to 23S rRNA. The L1 stalk is quite mobile in the ribosome, and is involved in E site tRNA release. In terms of biological role, protein L1 is also a translational repressor protein, it controls the translation of the L11 operon by binding to its mRNA. The chain is Large ribosomal subunit protein uL1 from Afipia carboxidovorans (strain ATCC 49405 / DSM 1227 / KCTC 32145 / OM5) (Oligotropha carboxidovorans).